A 335-amino-acid chain; its full sequence is Taste receptor type 2 member 119 (335 aa).

Residues 1–7 (MMEGHML) lie on the Extracellular side of the membrane. A helical transmembrane segment spans residues 8–28 (FFLLVVVVQFLTGVLANGLIV). Residues 29-43 (VVNAIDLIMWKKMAP) are Cytoplasmic-facing. The helical transmembrane segment at 44 to 64 (LDLLLFCLATSRIILQLCILF) threads the bilayer. The Extracellular portion of the chain corresponds to 65-81 (AQLGLSCLVRHTLFADN). A glycan (N-linked (GlcNAc...) asparagine) is linked at N81. A helical membrane pass occupies residues 82-102 (VTFVYIINELSLWFATWLGVF). The Cytoplasmic segment spans residues 103–124 (YCAKIATIPHPLFLWLKMRISR). Residues 125–145 (LVPWLILASVVYVTVTTFIHS) traverse the membrane as a helical segment. At 146–176 (RETSELPKQIFISFFSKNTTRVRPAHATLLS) the chain is on the extracellular side. N163 carries an N-linked (GlcNAc...) asparagine glycan. The helical transmembrane segment at 177–197 (VFVFGLTLPFLIFTVAVLLLL) threads the bilayer. Residues 198–224 (SSLWNHSRQMRTMVGTREPSRHALVSA) lie on the Cytoplasmic side of the membrane. Residues 225–245 (MLSILSFLILYLSHDMVAVLI) form a helical membrane-spanning segment. Over 246–256 (CTQGLHFGSRT) the chain is Extracellular. Residues 257–277 (FAFCLLVIGMYPSLHSIVLIL) traverse the membrane as a helical segment. Residues 278–335 (GNPKLKRNAKTFIVHCKCCHCARAWVTSRNPRLSDLPVPATHHSANKTSCSEACIMPS) lie on the Cytoplasmic side of the membrane.

It belongs to the G-protein coupled receptor T2R family. In terms of tissue distribution, expressed in subsets of taste receptor cells of the tongue and palate epithelium and exclusively in gustducin-positive cells. Expressed in 15% taste bud cells in circumvallate and foliate papillae but only in 2% in fungiform papillae. Expressed in the gastro and duodenal tissue. Not expressed in colon, liver, heart and kidney.

It is found in the membrane. Gustducin-coupled receptor implicated in the perception of bitter compounds in the oral cavity and the gastrointestinal tract. Signals through PLCB2 and the calcium-regulated cation channel TRPM5. This chain is Taste receptor type 2 member 119 (Tas2r119), found in Mus musculus (Mouse).